Reading from the N-terminus, the 185-residue chain is Ribosome-recycling factor (185 aa).

It belongs to the RRF family.

The protein localises to the cytoplasm. Responsible for the release of ribosomes from messenger RNA at the termination of protein biosynthesis. May increase the efficiency of translation by recycling ribosomes from one round of translation to another. The sequence is that of Ribosome-recycling factor from Clostridium botulinum (strain Alaska E43 / Type E3).